Consider the following 335-residue polypeptide: UDP-N-acetylenolpyruvoylglucosamine reductase 1 (335 aa).

The region spanning 36 to 202 is the FAD-binding PCMH-type domain; it reads RIGGPAAVFA…LEVELLLKPG (167 aa). Residue Arg-181 is part of the active site. The active-site Proton donor is Ser-231. Residue Glu-306 is part of the active site.

This sequence belongs to the MurB family. FAD serves as cofactor.

It localises to the cytoplasm. It carries out the reaction UDP-N-acetyl-alpha-D-muramate + NADP(+) = UDP-N-acetyl-3-O-(1-carboxyvinyl)-alpha-D-glucosamine + NADPH + H(+). Its pathway is cell wall biogenesis; peptidoglycan biosynthesis. Cell wall formation. This Corynebacterium glutamicum (strain ATCC 13032 / DSM 20300 / JCM 1318 / BCRC 11384 / CCUG 27702 / LMG 3730 / NBRC 12168 / NCIMB 10025 / NRRL B-2784 / 534) protein is UDP-N-acetylenolpyruvoylglucosamine reductase 1 (murB1).